A 609-amino-acid polypeptide reads, in one-letter code: UvrABC system protein C (609 aa).

A GIY-YIG domain is found at 16–94 (SSAGVYRMYD…IKQYMPKYNV (79 aa)). The UVR domain occupies 203–238 (QQVISTLVAKMEQAAQQQEYEQAARFRDQIMALRKV).

The protein belongs to the UvrC family. In terms of assembly, interacts with UvrB in an incision complex.

The protein localises to the cytoplasm. The UvrABC repair system catalyzes the recognition and processing of DNA lesions. UvrC both incises the 5' and 3' sides of the lesion. The N-terminal half is responsible for the 3' incision and the C-terminal half is responsible for the 5' incision. In Shewanella putrefaciens (strain CN-32 / ATCC BAA-453), this protein is UvrABC system protein C.